The chain runs to 476 residues: Serine/threonine-protein kinase Chk1 (476 aa).

Positions 1–265 (MAVPFVEDWD…IPDIKKDRWY (265 aa)) are interaction with CLSPN. Residues 9 to 265 (WDLVQTLGEG…IPDIKKDRWY (257 aa)) form the Protein kinase domain. ATP contacts are provided by residues 15 to 23 (LGEGAYGEV) and Lys38. The Proton acceptor role is filled by Asp130. A Glycyl lysine isopeptide (Lys-Gly) (interchain with G-Cter in ubiquitin) cross-link involves residue Lys132. The tract at residues 270–327 (KKGAKRPRVTSGGVSESPSGFSKHIQSNLDFSPVNSASSEENVKYSSSQPEPRTGLSL) is disordered. 4 positions are modified to phosphoserine: Ser280, Ser286, Ser296, and Ser301. Residues 281 to 320 (GGVSESPSGFSKHIQSNLDFSPVNSASSEENVKYSSSQPE) are compositionally biased toward polar residues. Residue Ser317 is modified to Phosphoserine; by ATM and ATR. Phosphoserine is present on Ser331. Ser345 carries the phosphoserine; by ATM and ATR modification. The segment at 391-476 (QCLKETCEKL…SSQKIWLPAT (86 aa)) is autoinhibitory region. Lys436 participates in a covalent cross-link: Glycyl lysine isopeptide (Lys-Gly) (interchain with G-Cter in ubiquitin). Ser467 and Ser468 each carry phosphoserine.

Belongs to the protein kinase superfamily. CAMK Ser/Thr protein kinase family. NIM1 subfamily. Interacts (phosphorylated by ATR) with RAD51. Interacts with and phosphorylates CLSPN, an adapter protein that regulates the ATR-dependent phosphorylation of CHEK1. Interacts with BRCA1. Interacts with and phosphorylates CDC25A, CDC25B and CDC25C. Interacts with FBXO6, which regulates CHEK1. Interacts with PPM1D, which regulates CHEK1 through dephosphorylation. Interacts with TIMELESS; DNA damage-dependent. Interacts with FEM1B; activates CHEK1 in response to stress. Interacts with TLK1. Interacts with XPO1 and YWHAZ. Interacts with CDK5RAP3; antagonizes CHEK1. As to quaternary structure, isoform 1 associates with isoform 2, the interaction is disrupted upon phosphorylation by ATR. Phosphorylated by ATR in a RAD17-dependent manner in response to ultraviolet irradiation and inhibition of DNA replication. Phosphorylated by ATM in response to ionizing irradiation. ATM and ATR can both phosphorylate Ser-317 and Ser-345 and this results in enhanced kinase activity. Phosphorylation at Ser-345 induces a change in the conformation of the protein, activates the kinase activity and is a prerequisite for interaction with FBXO6 and subsequent ubiquitination at Lys-436. Phosphorylation at Ser-345 also increases binding to 14-3-3 proteins and promotes nuclear retention. Conversely, dephosphorylation at Ser-345 by PPM1D may contribute to exit from checkpoint mediated cell cycle arrest. Phosphorylation at Ser-280 by AKT1/PKB, may promote mono and/or diubiquitination. Also phosphorylated at undefined residues during mitotic arrest, resulting in decreased activity. Post-translationally, ubiquitinated. Mono or diubiquitination promotes nuclear exclusion. The activated form (phosphorylated on Ser-345) is polyubiquitinated at Lys-436 by some SCF-type E3 ubiquitin ligase complex containing FBXO6 promoting its degradation. Ubiquitination and degradation are required to terminate the checkpoint and ensure that activated CHEK1 does not accumulate as cells progress through S phase, when replication forks encounter transient impediments during normal DNA replication. 'Lys-63'-mediated ubiquitination by TRAF4 at Lys-132 activates cell cycle arrest and activation of DNA repair. In terms of processing, proteolytically cleaved at the C-terminus by SPRTN during normal DNA replication, thereby promoting CHEK1 removal from chromatin and activating the protein kinase activity. In terms of tissue distribution, expressed ubiquitously with the most abundant expression in thymus, testis, small intestine and colon.

Its subcellular location is the nucleus. The protein localises to the chromosome. It is found in the cytoplasm. The protein resides in the cytoskeleton. It localises to the microtubule organizing center. Its subcellular location is the centrosome. It catalyses the reaction L-seryl-[protein] + ATP = O-phospho-L-seryl-[protein] + ADP + H(+). The enzyme catalyses L-threonyl-[protein] + ATP = O-phospho-L-threonyl-[protein] + ADP + H(+). With respect to regulation, activated through phosphorylation predominantly by ATR but also by ATM in response to DNA damage or inhibition of DNA replication. Activation is modulated by several mediators including CLSPN, BRCA1 and FEM1B. Proteolytic cleavage at the C-terminus by SPRTN during normal DNA replication activates the protein kinase activity. Its function is as follows. Serine/threonine-protein kinase which is required for checkpoint-mediated cell cycle arrest and activation of DNA repair in response to the presence of DNA damage or unreplicated DNA. May also negatively regulate cell cycle progression during unperturbed cell cycles. This regulation is achieved by a number of mechanisms that together help to preserve the integrity of the genome. Recognizes the substrate consensus sequence [R-X-X-S/T]. Binds to and phosphorylates CDC25A, CDC25B and CDC25C. Phosphorylation of CDC25A at 'Ser-178' and 'Thr-507' and phosphorylation of CDC25C at 'Ser-216' creates binding sites for 14-3-3 proteins which inhibit CDC25A and CDC25C. Phosphorylation of CDC25A at 'Ser-76', 'Ser-124', 'Ser-178', 'Ser-279' and 'Ser-293' promotes proteolysis of CDC25A. Phosphorylation of CDC25A at 'Ser-76' primes the protein for subsequent phosphorylation at 'Ser-79', 'Ser-82' and 'Ser-88' by NEK11, which is required for polyubiquitination and degradation of CDCD25A. Inhibition of CDC25 leads to increased inhibitory tyrosine phosphorylation of CDK-cyclin complexes and blocks cell cycle progression. Also phosphorylates NEK6. Binds to and phosphorylates RAD51 at 'Thr-309', which promotes the release of RAD51 from BRCA2 and enhances the association of RAD51 with chromatin, thereby promoting DNA repair by homologous recombination. Phosphorylates multiple sites within the C-terminus of TP53, which promotes activation of TP53 by acetylation and promotes cell cycle arrest and suppression of cellular proliferation. Also promotes repair of DNA cross-links through phosphorylation of FANCE. Binds to and phosphorylates TLK1 at 'Ser-743', which prevents the TLK1-dependent phosphorylation of the chromatin assembly factor ASF1A. This may enhance chromatin assembly both in the presence or absence of DNA damage. May also play a role in replication fork maintenance through regulation of PCNA. May regulate the transcription of genes that regulate cell-cycle progression through the phosphorylation of histones. Phosphorylates histone H3.1 (to form H3T11ph), which leads to epigenetic inhibition of a subset of genes. May also phosphorylate RB1 to promote its interaction with the E2F family of transcription factors and subsequent cell cycle arrest. Phosphorylates SPRTN, promoting SPRTN recruitment to chromatin. Reduces replication stress and activates the G2/M checkpoint, by phosphorylating and inactivating PABIR1/FAM122A and promoting the serine/threonine-protein phosphatase 2A-mediated dephosphorylation and stabilization of WEE1 levels and activity. In terms of biological role, endogenous repressor of isoform 1, interacts with, and antagonizes CHK1 to promote the S to G2/M phase transition. The protein is Serine/threonine-protein kinase Chk1 (CHEK1) of Homo sapiens (Human).